A 217-amino-acid chain; its full sequence is MOB kinase activator 3A (217 aa).

Residues cysteine 83, cysteine 88, histidine 165, and histidine 170 each coordinate Zn(2+).

Belongs to the MOB1/phocein family.

In terms of biological role, may regulate the activity of kinases. The sequence is that of MOB kinase activator 3A (MOB3A) from Bos taurus (Bovine).